The following is a 1339-amino-acid chain: DNA polymerase alpha catalytic subunit (1339 aa).

Disordered stretches follow at residues 1–29 and 60–89; these read MEDWVSCRSEEQKRCEEKGQSTFDESEEE and AKRRKPRKSGKVIATQKCAQPQNQHRHQQK. Over residues 8 to 19 the composition is skewed to basic and acidic residues; that stretch reads RSEEQKRCEEKG. Residues Cys-1179, Cys-1182, Cys-1215, Cys-1218, Cys-1235, Cys-1244, Cys-1274, and Cys-1289 each contribute to the Zn(2+) site. The CysA-type zinc-finger motif lies at 1179–1218; that stretch reads CTHCQLVVPVDPHKYINDMFSSREKPPPTAPFELYVCFNC. The CysB motif motif lies at 1244-1274; that stretch reads CSGGNVASVRALRAQFTYLRAMFDVPQALNC.

This sequence belongs to the DNA polymerase type-B family.

The protein localises to the nucleus. The enzyme catalyses DNA(n) + a 2'-deoxyribonucleoside 5'-triphosphate = DNA(n+1) + diphosphate. In terms of biological role, polymerase alpha in a complex with DNA primase is a replicative polymerase. This Trypanosoma brucei brucei protein is DNA polymerase alpha catalytic subunit.